A 267-amino-acid polypeptide reads, in one-letter code: NLP effector protein 6 (267 aa).

The N-terminal stretch at 1 to 35 is a signal peptide; it reads MRTTSPYSHCSHVEMNAGAFVTMLLVALSVCVAAA. Asn114 carries an N-linked (GlcNAc...) asparagine glycan. A Conserved undecapeptide motif motif is present at residues 117-127; that stretch reads AIMYAWYFPKR. Positions 134–140 match the Conserved heptapeptide motif motif; it reads IQRHDWK. N-linked (GlcNAc...) asparagine glycosylation is present at Asn192.

Belongs to the Necrosis inducing protein (NPP1) family.

It localises to the secreted. Its function is as follows. Probable secreted effector that may act as a pathogen-associated molecular pattern (PAMP) recognized by the plant immune system. The protein is NLP effector protein 6 of Plasmopara viticola (Downy mildew of grapevine).